The chain runs to 91 residues: Large ribosomal subunit protein bL31B (91 aa).

The protein belongs to the bacterial ribosomal protein bL31 family. Type B subfamily. As to quaternary structure, part of the 50S ribosomal subunit.

The polypeptide is Large ribosomal subunit protein bL31B (Mycolicibacterium vanbaalenii (strain DSM 7251 / JCM 13017 / BCRC 16820 / KCTC 9966 / NRRL B-24157 / PYR-1) (Mycobacterium vanbaalenii)).